A 468-amino-acid polypeptide reads, in one-letter code: Chromosomal replication initiator protein DnaA (468 aa).

Positions 1 to 84 (MSSSLWLQCL…RFEVGSRRVA (84 aa)) are domain I, interacts with DnaA modulators. The domain II stretch occupies residues 84–131 (AAPKPAPTRTPADVAAESSAPAQLQARKPVHKTWDDDAQVIADINHRS). Positions 85–95 (APKPAPTRTPA) are enriched in low complexity. The disordered stretch occupies residues 85–104 (APKPAPTRTPADVAAESSAP). The interval 132 to 348 (NVNPKHKFNN…GALNRVIANA (217 aa)) is domain III, AAA+ region. 4 residues coordinate ATP: glycine 176, glycine 178, lysine 179, and threonine 180. The tract at residues 349–468 (NFTGRPITID…YSNLIRTLSS (120 aa)) is domain IV, binds dsDNA.

It belongs to the DnaA family. As to quaternary structure, oligomerizes as a right-handed, spiral filament on DNA at oriC.

The protein resides in the cytoplasm. Plays an essential role in the initiation and regulation of chromosomal replication. ATP-DnaA binds to the origin of replication (oriC) to initiate formation of the DNA replication initiation complex once per cell cycle. Binds the DnaA box (a 9 base pair repeat at the origin) and separates the double-stranded (ds)DNA. Forms a right-handed helical filament on oriC DNA; dsDNA binds to the exterior of the filament while single-stranded (ss)DNA is stabiized in the filament's interior. The ATP-DnaA-oriC complex binds and stabilizes one strand of the AT-rich DNA unwinding element (DUE), permitting loading of DNA polymerase. After initiation quickly degrades to an ADP-DnaA complex that is not apt for DNA replication. Binds acidic phospholipids. Functionally, complements a temperature-sensitive E.coli mutant, the DnaA consensus is 5'-TT(A/T)TNCACA-3'. This chain is Chromosomal replication initiator protein DnaA, found in Vibrio harveyi (Beneckea harveyi).